Reading from the N-terminus, the 318-residue chain is tRNA U34 carboxymethyltransferase (318 aa).

Residues Lys-85, Trp-99, Lys-104, Gly-124, 175-176 (LD), Met-190, Tyr-194, and Arg-311 each bind carboxy-S-adenosyl-L-methionine.

Belongs to the class I-like SAM-binding methyltransferase superfamily. CmoB family. Homotetramer.

The catalysed reaction is carboxy-S-adenosyl-L-methionine + 5-hydroxyuridine(34) in tRNA = 5-carboxymethoxyuridine(34) in tRNA + S-adenosyl-L-homocysteine + H(+). Catalyzes carboxymethyl transfer from carboxy-S-adenosyl-L-methionine (Cx-SAM) to 5-hydroxyuridine (ho5U) to form 5-carboxymethoxyuridine (cmo5U) at position 34 in tRNAs. The protein is tRNA U34 carboxymethyltransferase of Ruthia magnifica subsp. Calyptogena magnifica.